A 167-amino-acid chain; its full sequence is MSVTLHTTLGDLKIEIFCESVPKTAENFLALCASGYYNASPFHRMIPSFMVQTGAPANPSPPENPKGGRSIYGPTFEDEIRPVLRHNERGIVSMANKGPNTNGSQFFILFDKAPHLDGLNTVFGKLIGDESLQTLAKLEGLEVDKKNRIKEEVRIERVTVHANPLAK.

Residues 1 to 160 enclose the PPIase cyclophilin-type domain; the sequence is MSVTLHTTLG…EEVRIERVTV (160 aa).

Belongs to the cyclophilin-type PPIase family. PPIL3 subfamily.

It catalyses the reaction [protein]-peptidylproline (omega=180) = [protein]-peptidylproline (omega=0). Its function is as follows. PPIases accelerate the folding of proteins. It catalyzes the cis-trans isomerization of proline imidic peptide bonds in oligopeptides. In Neurospora crassa (strain ATCC 24698 / 74-OR23-1A / CBS 708.71 / DSM 1257 / FGSC 987), this protein is Peptidyl-prolyl cis-trans isomerase-like 3 (cyp-10).